Here is a 435-residue protein sequence, read N- to C-terminus: Putrescine transporter PotE (435 aa).

Helical transmembrane passes span 8–28, 39–59, 95–115, 117–137, 148–168, 185–205, 224–244, 275–295, 320–340, 354–374, 386–406, and 409–429; these read IGVV…GIIM, ISIV…YAFA, LVIA…ELFG, ILSP…ATVL, ISSF…IIGW, VPTF…FLGL, IAVL…TNVI, VIMG…QFTI, APVV…LMTI, LAVV…AVLL, TTVF…YAAG, and AMLY…FVSY.

It belongs to the amino acid-polyamine-organocation (APC) superfamily. Basic amino acid/polyamine antiporter (APA) (TC 2.A.3.2) family.

It localises to the cell inner membrane. The enzyme catalyses putrescine(in) + H(+)(in) = putrescine(out) + H(+)(out). The catalysed reaction is putrescine(in) + L-ornithine(out) = putrescine(out) + L-ornithine(in). Functionally, catalyzes both the uptake and excretion of putrescine. The uptake of putrescine is dependent on the membrane potential and the excretion involves putrescine-ornithine antiporter activity. The protein is Putrescine transporter PotE of Haemophilus influenzae (strain ATCC 51907 / DSM 11121 / KW20 / Rd).